A 1281-amino-acid chain; its full sequence is Dynactin subunit 1 (1281 aa).

The tract at residues 1–25 (MAQSKRHVYSRTPSGSRMSAEASAR) is disordered. The CAP-Gly domain occupies 48-90 (GATLFATGKWVGVILDEAKGKNDGTVQGRKYFTCDEGHGIFVR). Residues 99–225 (DGADTTSPET…EEEGLRAQVR (127 aa)) form a disordered region. A compositionally biased stretch (polar residues) spans 102–114 (DTTSPETPDSSAS). 4 positions are modified to phosphothreonine: Thr-108, Thr-145, Thr-146, and Thr-147. The span at 129–152 (SKLRGPKPKKAPTARKTTTRRPKP) shows a compositional bias: basic residues. Residues 161–205 (AGASSSLGPSGSASAGELSSSEPSTPAQTPLAAPIIPTPALTSPG) are compositionally biased toward low complexity. Ser-179 and Ser-212 each carry phosphoserine. Positions 214-225 (SKEEEGLRAQVR) are enriched in basic and acidic residues. Coiled coils occupy residues 217–540 (EEGL…QQEA) and 952–1043 (IKEL…QSKR). The segment at 911 to 1281 (EYDAERPPSK…LHQLHDRLIS (371 aa)) is interaction with HPS6. Positions 1065 to 1084 (GEEQQRGGAPGQAPGIVPGP) are disordered.

The protein belongs to the dynactin 150 kDa subunit family. Monomer and homodimer. Subunit of dynactin, a multiprotein complex part of a tripartite complex with dynein and a adapter, such as BICDL1, BICD2 or HOOK3. The dynactin complex is built around ACTR1A/ACTB filament and consists of an actin-related filament composed of a shoulder domain, a pointed end and a barbed end. Its length is defined by its flexible shoulder domain. The soulder is composed of 2 DCTN1 subunits, 4 DCTN2 and 2 DCTN3. DCTN1/p150(glued) binds directly to microtubules and to cytoplasmic dynein. The 4 DCNT2 (via N-terminus) bind the ACTR1A filament and act as molecular rulers to determine the length. The pointed end is important for binding dynein-dynactin cargo adapters. Consists of 4 subunits: ACTR10, DCNT4, DCTN5 and DCTN6. The barbed end is composed of a CAPZA1:CAPZB heterodimers, which binds ACTR1A/ACTB filament and dynactin and stabilizes dynactin. Interacts with the C-terminus of MAPRE1, MAPRE2 and MAPRE3. Interacts (via C-terminus) with SNX6. Interacts with CLN3, DYNAP, ECPAS and FBXL5. Interacts with MISP; this interaction regulates its distribution at the cell cortex. Interacts with CEP131. Interacts with CEP126. Interacts with CLIP1. Interacts with dynein intermediate chain and dynein heavy chain. Interacts with PLK1 (via POLO-box domain). Interacts with TBCB. Binds preferentially to tyrosinated microtubules than to detyrosinated microtubules. Interacts with PARD6A. Interacts with HPS6. Interacts with KIF3A. Interacts with BICD2. Interacts with DST (isoform 9). Interacts with DST (isoform 1). Identified in a complex with MREG and RILP. Interacts with BCCIP (isoform 2/alpha). Interacts with DCDC1. Interacts with AKNA. Interacts with DYNC1I2. Interacts with RUFY3 and RUFY4. In terms of processing, ubiquitinated by a SCF complex containing FBXL5, leading to its degradation by the proteasome. Post-translationally, phosphorylation by SLK at Thr-145, Thr-146 and Thr-147 targets DCTN1 to the centrosome. It is uncertain if SLK phosphorylates all three threonines or one or two of them. PLK1-mediated phosphorylation at Ser-179 is essential for its localization in the nuclear envelope, promotes its dissociation from microtubules during early mitosis and positively regulates nuclear envelope breakdown during prophase.

It localises to the cytoplasm. Its subcellular location is the cytoskeleton. The protein localises to the microtubule organizing center. The protein resides in the centrosome. It is found in the centriole. It localises to the spindle. Its subcellular location is the nucleus envelope. The protein localises to the cell cortex. In terms of biological role, part of the dynactin complex that activates the molecular motor dynein for ultra-processive transport along microtubules. Plays a key role in dynein-mediated retrograde transport of vesicles and organelles along microtubules by recruiting and tethering dynein to microtubules. Binds to both dynein and microtubules providing a link between specific cargos, microtubules and dynein. Essential for targeting dynein to microtubule plus ends, recruiting dynein to membranous cargos and enhancing dynein processivity (the ability to move along a microtubule for a long distance without falling off the track). Can also act as a brake to slow the dynein motor during motility along the microtubule. Can regulate microtubule stability by promoting microtubule formation, nucleation and polymerization and by inhibiting microtubule catastrophe in neurons. Inhibits microtubule catastrophe by binding both to microtubules and to tubulin, leading to enhanced microtubule stability along the axon. Plays a role in metaphase spindle orientation. Plays a role in centriole cohesion and subdistal appendage organization and function. Its recruitment to the centriole in a KIF3A-dependent manner is essential for the maintenance of centriole cohesion and the formation of subdistal appendage. Also required for microtubule anchoring at the mother centriole. Plays a role in primary cilia formation. This Sus scrofa (Pig) protein is Dynactin subunit 1 (DCTN1).